Here is a 334-residue protein sequence, read N- to C-terminus: Homoserine O-acetyltransferase (334 aa).

The region spanning 61-318 (LVLHALTGDS…GSIHGHDAFL (258 aa)) is the AB hydrolase-1 domain. Residue Ser148 is the Nucleophile of the active site. A substrate-binding site is contributed by Arg205. Active-site residues include Asp285 and His314. Asp315 is a substrate binding site.

Belongs to the AB hydrolase superfamily. MetX family. As to quaternary structure, homodimer.

Its subcellular location is the cytoplasm. It carries out the reaction L-homoserine + acetyl-CoA = O-acetyl-L-homoserine + CoA. Its pathway is amino-acid biosynthesis; L-methionine biosynthesis via de novo pathway; O-acetyl-L-homoserine from L-homoserine: step 1/1. Functionally, transfers an acetyl group from acetyl-CoA to L-homoserine, forming acetyl-L-homoserine. The protein is Homoserine O-acetyltransferase of Deinococcus radiodurans (strain ATCC 13939 / DSM 20539 / JCM 16871 / CCUG 27074 / LMG 4051 / NBRC 15346 / NCIMB 9279 / VKM B-1422 / R1).